Here is a 292-residue protein sequence, read N- to C-terminus: MNNHFKCIGIVGHPRHPTALTTHEMLYRWLCDQGYEVIVEQQIAHELQLKNVPTGTLAEIGQQADLAVVVGGDGNMLGAARTLARYDINVIGINRGNLGFLTDLDPDNALQQLSDVLEGRYISEKRFLLEAQVCQQDRQKRISTAINEVVLHPGKVAHMIEFEVYIDETFAFSQRSDGLIISTPTGSTAYSLSAGGPILTPSLDAITLVPMFPHTLSARPLVINSSSTIRLRFSHRRSDLEISCDSQIALPIQEGEDVLIRRCDYHLNLIHPKDYSYFNTLSTKLGWSKKLF.

Aspartate 73 functions as the Proton acceptor in the catalytic mechanism. NAD(+)-binding positions include 73-74 (DG), 147-148 (NE), histidine 158, arginine 175, aspartate 177, 188-193 (TAYSLS), and glutamine 247.

This sequence belongs to the NAD kinase family. A divalent metal cation serves as cofactor.

The protein resides in the cytoplasm. It carries out the reaction NAD(+) + ATP = ADP + NADP(+) + H(+). Functionally, involved in the regulation of the intracellular balance of NAD and NADP, and is a key enzyme in the biosynthesis of NADP. Catalyzes specifically the phosphorylation on 2'-hydroxyl of the adenosine moiety of NAD to yield NADP. The sequence is that of NAD kinase from Salmonella agona (strain SL483).